The following is a 343-amino-acid chain: Ribosomal RNA small subunit methyltransferase H (343 aa).

Residues 39-41, Asp58, Phe87, Asp108, and Gln115 contribute to the S-adenosyl-L-methionine site; that span reads AGH.

The protein belongs to the methyltransferase superfamily. RsmH family.

It is found in the cytoplasm. It catalyses the reaction cytidine(1402) in 16S rRNA + S-adenosyl-L-methionine = N(4)-methylcytidine(1402) in 16S rRNA + S-adenosyl-L-homocysteine + H(+). In terms of biological role, specifically methylates the N4 position of cytidine in position 1402 (C1402) of 16S rRNA. This is Ribosomal RNA small subunit methyltransferase H from Bifidobacterium adolescentis (strain ATCC 15703 / DSM 20083 / NCTC 11814 / E194a).